The primary structure comprises 709 residues: Phosphomethylpyrimidine synthase (709 aa).

Positions 1-13 are enriched in polar residues; that stretch reads MNIRSNPDTTLPA. Disordered regions lie at residues 1-21 and 125-168; these read MNIR…PLPS and DAPA…GREQ. Substrate is bound by residues Asn274, Met303, Tyr332, His368, 388-390, 429-432, and Glu468; these read SRG and DGLR. Position 472 (His472) interacts with Zn(2+). Residue Tyr495 participates in substrate binding. His536 lines the Zn(2+) pocket. Cys616, Cys619, and Cys624 together coordinate [4Fe-4S] cluster.

Belongs to the ThiC family. As to quaternary structure, homodimer. [4Fe-4S] cluster serves as cofactor.

It catalyses the reaction 5-amino-1-(5-phospho-beta-D-ribosyl)imidazole + S-adenosyl-L-methionine = 4-amino-2-methyl-5-(phosphooxymethyl)pyrimidine + CO + 5'-deoxyadenosine + formate + L-methionine + 3 H(+). It functions in the pathway cofactor biosynthesis; thiamine diphosphate biosynthesis. In terms of biological role, catalyzes the synthesis of the hydroxymethylpyrimidine phosphate (HMP-P) moiety of thiamine from aminoimidazole ribotide (AIR) in a radical S-adenosyl-L-methionine (SAM)-dependent reaction. This Rhodopseudomonas palustris (strain BisB18) protein is Phosphomethylpyrimidine synthase.